The chain runs to 20 residues: Fibrinogen beta chain (20 aa).

Residues isoleucine 1–arginine 12 are compositionally biased toward acidic residues. A disordered region spans residues isoleucine 1–arginine 20.

Heterohexamer; disulfide linked. Contains 2 sets of 3 non-identical chains (alpha, beta and gamma). The 2 heterotrimers are in head to head conformation with the N-termini in a small central domain. Post-translationally, conversion of fibrinogen to fibrin is triggered by thrombin, which cleaves fibrinopeptides A and B from alpha and beta chains, and thus exposes the N-terminal polymerization sites responsible for the formation of the soft clot.

It is found in the secreted. Functionally, cleaved by the protease thrombin to yield monomers which, together with fibrinogen alpha (FGA) and fibrinogen gamma (FGG), polymerize to form an insoluble fibrin matrix. Fibrin has a major function in hemostasis as one of the primary components of blood clots. In addition, functions during the early stages of wound repair to stabilize the lesion and guide cell migration during re-epithelialization. Was originally thought to be essential for platelet aggregation, based on in vitro studies using anticoagulated blood. However subsequent studies have shown that it is not absolutely required for thrombus formation in vivo. Enhances expression of SELP in activated platelets. Maternal fibrinogen is essential for successful pregnancy. Fibrin deposition is also associated with infection, where it protects against IFNG-mediated hemorrhage. May also facilitate the antibacterial immune response via both innate and T-cell mediated pathways. The protein is Fibrinogen beta chain (FGB) of Felis catus (Cat).